The primary structure comprises 76 residues: Dermaseptin-SP2 (76 aa).

A signal peptide spans 1–22 (MAFLKKSLFLVLFLGLVSLSIC). A propeptide spanning residues 23–45 (EEEKRENEDEEEQEDEEQSEEKR) is cleaved from the precursor. The segment at 24–44 (EEKRENEDEEEQEDEEQSEEK) is disordered. The segment covering 30–41 (EDEEEQEDEEQS) has biased composition (acidic residues). Gln-73 bears the Glutamine amide mark. The propeptide occupies 74–76 (GEQ).

As to expression, expressed by the skin glands.

It localises to the secreted. It is found in the target cell membrane. Functionally, antimicrobial peptide with activity against Gram-positive and Gram-negative bacteria and fungi. Has been tested against E.coli (MIC=2.68-8 uM), S.aureus (ATCC 25923, MIC=2.68-8 uM), S.aureus (ATCC oxacillin resistant, MIC=2.68 uM), K.pneumoniae (MIC=10.71 uM) and C.albicans (MIC=10.71-32 uM). Probably acts by disturbing membrane functions with its alpha-helical amphipathic structure. May penetrate bacterial membranes, but stay at the mammalian membrane surface. Shows a very weak hemolytic activity. The sequence is that of Dermaseptin-SP2 from Agalychnis spurrelli (Gliding leaf frog).